Here is an 82-residue protein sequence, read N- to C-terminus: Penaeidin-3g (82 aa).

Residues 1–19 form the signal peptide; that stretch reads MRLVVCLVFLASFALVCQG. Glutamine 20 carries the pyrrolidone carboxylic acid modification. Cystine bridges form between cysteine 51-cysteine 66, cysteine 55-cysteine 73, and cysteine 67-cysteine 74. Serine 81 carries the post-translational modification Serine amide.

It belongs to the penaeidin family.

The protein localises to the cytoplasmic granule. Functionally, antibacterial and antifungal activity. Presents chitin-binding activity. This Penaeus vannamei (Whiteleg shrimp) protein is Penaeidin-3g.